A 90-amino-acid chain; its full sequence is Bombyxin B-12 (90 aa).

The first 20 residues, 1 to 20 (MMKTTIMFMLVVVISLTYSS), serve as a signal peptide directing secretion. 3 cysteine pairs are disulfide-bonded: Cys-30–Cys-76, Cys-42–Cys-89, and Cys-75–Cys-80. The propeptide at 49–67 (SGAQYAPYFWTRQYLGSRG) is c peptide like.

This sequence belongs to the insulin family. Heterodimer of a B chain and an A chain linked by two disulfide bonds.

The protein resides in the secreted. Its function is as follows. Brain peptide responsible for activation of prothoracic glands to produce ecdysone in insects. The polypeptide is Bombyxin B-12 (BBXB12) (Bombyx mori (Silk moth)).